Here is a 247-residue protein sequence, read N- to C-terminus: ATP synthase subunit a, chloroplastic (247 aa).

A run of 5 helical transmembrane segments spans residues Gln38–Val58, Val95–Leu115, Ile134–Ser154, Leu199–Leu219, and Gly220–Gly240.

Belongs to the ATPase A chain family. In terms of assembly, F-type ATPases have 2 components, CF(1) - the catalytic core - and CF(0) - the membrane proton channel. CF(1) has five subunits: alpha(3), beta(3), gamma(1), delta(1), epsilon(1). CF(0) has four main subunits: a, b, b' and c.

The protein localises to the plastid. It localises to the chloroplast thylakoid membrane. In terms of biological role, key component of the proton channel; it plays a direct role in the translocation of protons across the membrane. In Cucumis sativus (Cucumber), this protein is ATP synthase subunit a, chloroplastic.